The following is a 96-amino-acid chain: RNA-binding protein Hfq (96 aa).

The 60-residue stretch at 9–68 folds into the Sm domain; the sequence is DPYLNALRRERIPVSIYLVNGIKLQGQIESFDQFVILLKNTVNQMVYKHAISTVVPARSV.

This sequence belongs to the Hfq family. Homohexamer.

In terms of biological role, RNA chaperone that binds small regulatory RNA (sRNAs) and mRNAs to facilitate mRNA translational regulation in response to envelope stress, environmental stress and changes in metabolite concentrations. Also binds with high specificity to tRNAs. This Histophilus somni (strain 129Pt) (Haemophilus somnus) protein is RNA-binding protein Hfq.